Consider the following 103-residue polypeptide: MAGRSEEDQQLLQAIQIIKILYQSNPCPTPAGSRNARKNRRRRWRRRQAQVDSLATRILATVVHGSQDNNLVDLPPLEQLNIRDPEADRLPGTGTVDPGTKDN.

A Phosphoserine; by host CK2 modification is found at Ser5. The tract at residues 17–25 (IIKILYQSN) is homomultimerization. Disordered stretches follow at residues 24-49 (SNPC…RRQA) and 82-103 (IRDP…TKDN). A Nuclear localization signal and RNA-binding (RRE) motif is present at residues 33–49 (SRNARKNRRRRWRRRQA). Residues 35–48 (NARKNRRRRWRRRQ) show a composition bias toward basic residues. Residues 72–83 (VDLPPLEQLNIR) carry the Nuclear export signal and binding to XPO1 motif.

This sequence belongs to the HIV-1 REV protein family. Homomultimer; when bound to the RRE. Multimeric assembly is essential for activity and may involve XPO1. Binds to human KPNB1, XPO1, TNPO1, RANBP5 and IPO7. Interacts with the viral Integrase. Interacts with human KHDRBS1. Interacts with human NAP1; this interaction decreases Rev multimerization and stimulates its activity. Interacts with human DEAD-box helicases DDX3 and DDX24; these interactions may serve for viral RNA export to the cytoplasm and packaging, respectively. Interacts with human PSIP1; this interaction may inhibit HIV-1 DNA integration by promoting dissociation of the Integrase-LEDGF/p75 complex. In terms of processing, asymmetrically arginine dimethylated at one site by host PRMT6. Methylation impairs the RNA-binding activity and export of viral RNA from the nucleus to the cytoplasm. Phosphorylated by protein kinase CK2. Presence of, and maybe binding to the N-terminus of the regulatory beta subunit of CK2 is necessary for CK2-mediated Rev's phosphorylation.

It is found in the host nucleus. The protein localises to the host nucleolus. It localises to the host cytoplasm. Functionally, escorts unspliced or incompletely spliced viral pre-mRNAs (late transcripts) out of the nucleus of infected cells. These pre-mRNAs carry a recognition sequence called Rev responsive element (RRE) located in the env gene, that is not present in fully spliced viral mRNAs (early transcripts). This function is essential since most viral proteins are translated from unspliced or partially spliced pre-mRNAs which cannot exit the nucleus by the pathway used by fully processed cellular mRNAs. Rev itself is translated from a fully spliced mRNA that readily exits the nucleus. Rev's nuclear localization signal (NLS) binds directly to KPNB1/Importin beta-1 without previous binding to KPNA1/Importin alpha-1. KPNB1 binds to the GDP bound form of RAN (Ran-GDP) and targets Rev to the nucleus. In the nucleus, the conversion from Ran-GDP to Ran-GTP dissociates Rev from KPNB1 and allows Rev's binding to the RRE in viral pre-mRNAs. Rev multimerization on the RRE via cooperative assembly exposes its nuclear export signal (NES) to the surface. Rev can then form a complex with XPO1/CRM1 and Ran-GTP, leading to nuclear export of the complex. Conversion from Ran-GTP to Ran-GDP mediates dissociation of the Rev/RRE/XPO1/RAN complex, so that Rev can return to the nucleus for a subsequent round of export. Beside KPNB1, also seems to interact with TNPO1/Transportin-1, RANBP5/IPO5 and IPO7/RANBP7 for nuclear import. The nucleoporin-like HRB/RIP is an essential cofactor that probably indirectly interacts with Rev to release HIV RNAs from the perinuclear region to the cytoplasm. The chain is Protein Rev from Human immunodeficiency virus type 1 group O (isolate MVP5180) (HIV-1).